The sequence spans 194 residues: Probable WRKY transcription factor 51 (194 aa).

The segment at 58-97 (SSETFTGESGGSGSATTLSKKESTNRGSKESDQTKETGHR) is disordered. Positions 76–96 (SKKESTNRGSKESDQTKETGH) are enriched in basic and acidic residues. Positions 104–169 (SKIDVMDDGF…YEGVHNHESL (66 aa)) form a DNA-binding region, WRKY.

This sequence belongs to the WRKY group II-c family. In terms of assembly, interacts with CAMBP25/VQ15.

Its subcellular location is the nucleus. In terms of biological role, transcription factor. Interacts specifically with the W box (5'-(T)TGAC[CT]-3'), a frequently occurring elicitor-responsive cis-acting element. Involved in defense responses. May act as positive regulator of salicylic acid (SA)-mediated signaling and negative regulator of jasmonic acid (JA)-mediated signaling. In Arabidopsis thaliana (Mouse-ear cress), this protein is Probable WRKY transcription factor 51 (WRKY51).